Here is a 212-residue protein sequence, read N- to C-terminus: ATP-dependent dethiobiotin synthetase BioD (212 aa).

12 to 17 (DCGKTF) contributes to the ATP binding site. Residue threonine 16 coordinates Mg(2+). Lysine 33 is a catalytic residue. Serine 37 contributes to the substrate binding site. Residues aspartate 50, 110–113 (EGAG), and 170–171 (NC) contribute to the ATP site. Positions 50 and 110 each coordinate Mg(2+).

The protein belongs to the dethiobiotin synthetase family. In terms of assembly, homodimer. Mg(2+) is required as a cofactor.

The protein localises to the cytoplasm. It carries out the reaction (7R,8S)-7,8-diammoniononanoate + CO2 + ATP = (4R,5S)-dethiobiotin + ADP + phosphate + 3 H(+). Its pathway is cofactor biosynthesis; biotin biosynthesis; biotin from 7,8-diaminononanoate: step 1/2. Functionally, catalyzes a mechanistically unusual reaction, the ATP-dependent insertion of CO2 between the N7 and N8 nitrogen atoms of 7,8-diaminopelargonic acid (DAPA, also called 7,8-diammoniononanoate) to form a ureido ring. The sequence is that of ATP-dependent dethiobiotin synthetase BioD from Legionella pneumophila subsp. pneumophila (strain Philadelphia 1 / ATCC 33152 / DSM 7513).